The following is a 360-amino-acid chain: Membrane-bound lytic murein transglycosylase C (360 aa).

The first 16 residues, 1–16 (MKKLLALAVIAPLLIS), serve as a signal peptide directing secretion. The N-palmitoyl cysteine moiety is linked to residue Cys-17. Cys-17 carries S-diacylglycerol cysteine lipidation.

It belongs to the transglycosylase Slt family.

It localises to the cell outer membrane. It carries out the reaction Exolytic cleavage of the (1-&gt;4)-beta-glycosidic linkage between N-acetylmuramic acid (MurNAc) and N-acetylglucosamine (GlcNAc) residues in peptidoglycan, from either the reducing or the non-reducing ends of the peptidoglycan chains, with concomitant formation of a 1,6-anhydrobond in the MurNAc residue.. Functionally, murein-degrading enzyme. May play a role in recycling of muropeptides during cell elongation and/or cell division. The polypeptide is Membrane-bound lytic murein transglycosylase C (Salmonella arizonae (strain ATCC BAA-731 / CDC346-86 / RSK2980)).